The sequence spans 447 residues: MTTRKYFGTDGIRGRVGQFPITPEFMLKLGWAAGMAFRKMGACRILVGKDTRISGYMFESALEAGLSAAGADVLLLGPMPTPAIAYLTRTFHAEAGIVISASHNPHYDNGIKFFSGQGTKLPDEIEMMIEELLDAPMTVAESENLGKVSRINDAAGRYIEFCKSSVPTSTDFAGLKVVIDCAHGATYKVAPNVFRELGAQVVVLSAQPDGLNINKNCGSTHMEALQAAVVAEHADMGIGFDGDGDRVLMVDHTGTIVDGDELLYIIARDLHERGRLQGGVVGTLMSNLGLELALAEQSIPFVRANVGDRYVIAELLERNWQIGGENSGHIVCFQHATTGDAIIASLQVILALRRSGISLAEARLKLRKCPQILINVRFAGSGVDPVSHPSVQQACARVTEQMAGRGRVLLRKSGTEPLVRVMVEGEDETQVRSYAEELAKLVAEVCA.

The active-site Phosphoserine intermediate is Ser-102. Ser-102, Asp-241, Asp-243, and Asp-245 together coordinate Mg(2+). Ser-102 bears the Phosphoserine mark.

Belongs to the phosphohexose mutase family. Mg(2+) is required as a cofactor. In terms of processing, activated by phosphorylation.

It catalyses the reaction alpha-D-glucosamine 1-phosphate = D-glucosamine 6-phosphate. In terms of biological role, catalyzes the conversion of glucosamine-6-phosphate to glucosamine-1-phosphate. This is Phosphoglucosamine mutase from Pseudomonas savastanoi pv. phaseolicola (strain 1448A / Race 6) (Pseudomonas syringae pv. phaseolicola (strain 1448A / Race 6)).